A 604-amino-acid polypeptide reads, in one-letter code: Netrin-1 (604 aa).

The signal sequence occupies residues 1-24 (MMRAVWEALAALAAVACLVGAVRG). In terms of domain architecture, Laminin N-terminal spans 47 to 284 (HPRRCIPDFV…AVSDLQVGGR (238 aa)). Residues Asn-95, Asn-116, and Asn-131 are each glycosylated (N-linked (GlcNAc...) asparagine). 15 cysteine pairs are disulfide-bonded: Cys-119-Cys-152, Cys-285-Cys-294, Cys-287-Cys-304, Cys-306-Cys-315, Cys-318-Cys-338, Cys-341-Cys-350, Cys-343-Cys-368, Cys-371-Cys-380, Cys-383-Cys-401, Cys-404-Cys-416, Cys-406-Cys-423, Cys-425-Cys-434, Cys-437-Cys-451, Cys-472-Xaa-544, and Cys-491-Cys-601. Laminin EGF-like domains follow at residues 285 to 340 (CKCN…ECVA), 341 to 403 (CNCN…ACKA), and 404 to 453 (CDCH…PCIK). N-linked (GlcNAc...) asparagine glycosylation occurs at Asn-417. Positions 472-601 (CDSYCKASKG…FQQREKKGKC (130 aa)) constitute an NTR domain. A Cell attachment site motif is present at residues 530–532 (RGD).

In terms of assembly, binds to its receptors; DCC, UNC5A, UNC5B, UNC5C and probably UNC5D. Binds to its receptor; DSCAM. Interacts with APP.

The protein localises to the secreted. Its subcellular location is the cytoplasm. Its function is as follows. Netrins control guidance of CNS commissural axons and peripheral motor axons. Its association with either DCC or some UNC5 receptors will lead to axon attraction or repulsion, respectively. Binding to UNC5C might cause dissociation of UNC5C from polymerized TUBB3 in microtubules and thereby lead to increased microtubule dynamics and axon repulsion. Involved in dorsal root ganglion axon projection towards the spinal cord. It also serves as a survival factor via its association with its receptors which prevent the initiation of apoptosis. Involved in colorectal tumorigenesis by regulating apoptosis. The chain is Netrin-1 (Ntn1) from Rattus norvegicus (Rat).